Consider the following 375-residue polypeptide: MAKKDYYEILGVSKTAEEREIKKAYKRLAMKFHPDRNQEQDAEARFKEIKEAYEILTDAQKRAAYDQYGHAAFEQGGMGGGGGFGGGAEFSDIFGDVFGDIFGGGRRQRASRGSDLRYNMELSLEEAVRGVTKEIRIPTLEECGVCHGSGAKPGSSPVTCPTCHGQGQVQMRQGFFTVQQACPHCHGRGQIIKDPCNSCHGHGRVEKAKTLSVKIPAGVDTGDRIRLAGEGEAGEHGAPAGDLYVQVQVKAHPIFEREGNNLYCEVPINFAMAALGGEIEVPTLDGRVKLKVPAETQTGKLFRMRGKGVKSVRGGSQGDLLCRVVVETPVNLNDKQKQLLKELEESLGGPSGDKNSPRSKSFFDGVKKFFDDLTR.

The J domain occupies 5–69 (DYYEILGVSK…QKRAAYDQYG (65 aa)). Residues 130–208 (GVTKEIRIPT…CHGHGRVEKA (79 aa)) form a CR-type zinc finger. Residues cysteine 143, cysteine 146, cysteine 160, cysteine 163, cysteine 182, cysteine 185, cysteine 196, and cysteine 199 each coordinate Zn(2+). CXXCXGXG motif repeat units lie at residues 143-150 (CGVCHGSG), 160-167 (CPTCHGQG), 182-189 (CPHCHGRG), and 196-203 (CNSCHGHG).

This sequence belongs to the DnaJ family. In terms of assembly, homodimer. It depends on Zn(2+) as a cofactor.

Its subcellular location is the cytoplasm. Participates actively in the response to hyperosmotic and heat shock by preventing the aggregation of stress-denatured proteins and by disaggregating proteins, also in an autonomous, DnaK-independent fashion. Unfolded proteins bind initially to DnaJ; upon interaction with the DnaJ-bound protein, DnaK hydrolyzes its bound ATP, resulting in the formation of a stable complex. GrpE releases ADP from DnaK; ATP binding to DnaK triggers the release of the substrate protein, thus completing the reaction cycle. Several rounds of ATP-dependent interactions between DnaJ, DnaK and GrpE are required for fully efficient folding. Also involved, together with DnaK and GrpE, in the DNA replication of plasmids through activation of initiation proteins. In Serratia proteamaculans (strain 568), this protein is Chaperone protein DnaJ.